The sequence spans 523 residues: MENGLWEVLGSKGLLKKHEFIRILVQCLYSLGFKNSASCLEFESKILYKTADSEFLEKQVLSGNWDSCVQVLDRIFDNSMDDTRNTALYLVFKQCLLEYLKRGDVSLALNVLRKQAPLLRMGKEKIHRLACDIVYSKEMESGEVDNCLVLDLRRKLLVELEKLIPLPIVIPERRLEHLVETAVMDQIDTCMYHNSCDAVSLYKDHCCGRDQIPSETVQILVAHKNEVWFVQFSNSGKYLATASSDCTAIIWKVLDDNKVELKHTLESHQNPVSFVSWSPDDTKLLTCGNAEVLKLWDVDTGVLRHTFGNNNTGFTVSSCAWFPDSTRLVCGSSDPERGIVMWDTDGNEIKAWRGTRIPKVVDLAVTPDGESMITVFSDKEIRILNLETKVERVISEEQPITSLSISGDGKFFIVNLSCQEIHLWDLAGEWKQPLKFSGHRQSKYVIRSCFGGLDSSFIASGSEDSQVYIWNLKNTKPLEVLSGHSMTVNCVSWNPKNPRMLASASDDQTIRIWGPGKPNKPLN.

Residues 16–48 (KKHEFIRILVQCLYSLGFKNSASCLEFESKILY) form the LisH domain. Residues 49-107 (KTADSEFLEKQVLSGNWDSCVQVLDRIFDNSMDDTRNTALYLVFKQCLLEYLKRGDVSL) enclose the CTLH domain. WD repeat units follow at residues 222–261 (AHKN…KVEL), 267–306 (SHQN…LRHT), 310–353 (NNTG…KAWR), 355–394 (TRIP…ERVI), 395–434 (SEEQ…KQPL), 438–480 (GHRQ…PLEV), and 483–523 (GHSM…KPLN).

As to quaternary structure, interacts with RANBPM.

It localises to the cytoplasm. The sequence is that of WD repeat-containing protein WDS homolog from Arabidopsis thaliana (Mouse-ear cress).